The primary structure comprises 276 residues: Diaminopimelate epimerase (276 aa).

Substrate contacts are provided by Asn-13, Gln-46, and Asn-66. Residue Cys-75 is the Proton donor of the active site. Substrate-binding positions include 76–77, Asn-159, Asn-192, and 210–211; these read GN and ER. Cys-219 serves as the catalytic Proton acceptor. 220–221 is a substrate binding site; that stretch reads GT.

This sequence belongs to the diaminopimelate epimerase family. As to quaternary structure, homodimer.

The protein resides in the cytoplasm. It catalyses the reaction (2S,6S)-2,6-diaminopimelate = meso-2,6-diaminopimelate. Its pathway is amino-acid biosynthesis; L-lysine biosynthesis via DAP pathway; DL-2,6-diaminopimelate from LL-2,6-diaminopimelate: step 1/1. Functionally, catalyzes the stereoinversion of LL-2,6-diaminopimelate (L,L-DAP) to meso-diaminopimelate (meso-DAP), a precursor of L-lysine and an essential component of the bacterial peptidoglycan. In Pseudomonas syringae pv. tomato (strain ATCC BAA-871 / DC3000), this protein is Diaminopimelate epimerase.